Here is a 572-residue protein sequence, read N- to C-terminus: Proteinaceous RNase P 1, chloroplastic/mitochondrial (572 aa).

A chloroplast and mitochondrion-targeting transit peptide spans 1-70 (MLRLTCFTPS…SRHLCTLPLA (70 aa)). PPR repeat units lie at residues 96–130 (PEAL…GVQL), 136–174 (NVLL…KVVP), 175–209 (NEAT…GIQP), and 210–244 (RLRS…EVVP). The 228-residue stretch at 338–565 (MDENGVCKCC…DLQTSRQWLC (228 aa)) folds into the PRORP domain. The Zn(2+) site is built by Cys-344 and Cys-347. Residues Asp-399, Asp-474, Asp-475, and Asp-493 each contribute to the Mn(2+) site. Zn(2+) contacts are provided by His-548 and Cys-565.

This sequence belongs to the PPR family. P subfamily. Mg(2+) is required as a cofactor. The cofactor is Mn(2+).

Its subcellular location is the mitochondrion. It localises to the plastid. The protein resides in the chloroplast. The enzyme catalyses Endonucleolytic cleavage of RNA, removing 5'-extranucleotides from tRNA precursor.. Functionally, endonuclease RNase P responsible for the 5' maturation of tRNA precursors. Preferentially cleaves at the unusual cleavage site, but also able to cleave at the classical cleavage site. Also involved in the maturation of mRNAs in mitochondria. In Arabidopsis thaliana (Mouse-ear cress), this protein is Proteinaceous RNase P 1, chloroplastic/mitochondrial (PRORP1).